The chain runs to 78 residues: Small ribosomal subunit protein bS18 (78 aa).

Belongs to the bacterial ribosomal protein bS18 family. As to quaternary structure, part of the 30S ribosomal subunit. Forms a tight heterodimer with protein bS6.

Functionally, binds as a heterodimer with protein bS6 to the central domain of the 16S rRNA, where it helps stabilize the platform of the 30S subunit. The protein is Small ribosomal subunit protein bS18 of Frankia casuarinae (strain DSM 45818 / CECT 9043 / HFP020203 / CcI3).